We begin with the raw amino-acid sequence, 92 residues long: Small ribosomal subunit protein uS19 (92 aa).

This sequence belongs to the universal ribosomal protein uS19 family.

Its function is as follows. Protein S19 forms a complex with S13 that binds strongly to the 16S ribosomal RNA. This chain is Small ribosomal subunit protein uS19, found in Caulobacter vibrioides (strain ATCC 19089 / CIP 103742 / CB 15) (Caulobacter crescentus).